The following is a 225-amino-acid chain: Small ribosomal subunit protein uS7 (225 aa).

An N-acetylserine modification is found at Ser-2. A Phosphothreonine modification is found at Thr-27. Glycyl lysine isopeptide (Lys-Gly) (interchain with G-Cter in ubiquitin) cross-links involve residues Lys-45 and Lys-203.

Belongs to the universal ribosomal protein uS7 family. Component of the small ribosomal subunit (SSU). Mature yeast ribosomes consist of a small (40S) and a large (60S) subunit. The 40S small subunit contains 1 molecule of ribosomal RNA (18S rRNA) and 33 different proteins (encoded by 57 genes). The large 60S subunit contains 3 rRNA molecules (25S, 5.8S and 5S rRNA) and 46 different proteins (encoded by 81 genes). Post-translationally, N-terminally acetylated by acetyltransferase NatA.

The protein localises to the cytoplasm. Functionally, component of the ribosome, a large ribonucleoprotein complex responsible for the synthesis of proteins in the cell. The small ribosomal subunit (SSU) binds messenger RNAs (mRNAs) and translates the encoded message by selecting cognate aminoacyl-transfer RNA (tRNA) molecules. The large subunit (LSU) contains the ribosomal catalytic site termed the peptidyl transferase center (PTC), which catalyzes the formation of peptide bonds, thereby polymerizing the amino acids delivered by tRNAs into a polypeptide chain. The nascent polypeptides leave the ribosome through a tunnel in the LSU and interact with protein factors that function in enzymatic processing, targeting, and the membrane insertion of nascent chains at the exit of the ribosomal tunnel. This chain is Small ribosomal subunit protein uS7, found in Saccharomyces cerevisiae (strain ATCC 204508 / S288c) (Baker's yeast).